A 289-amino-acid polypeptide reads, in one-letter code: Syntaxin-2 (289 aa).

The Cytoplasmic segment spans residues 1-265 (MRDRLPDLTA…KYQSKARRKK (265 aa)). Positions 68–101 (EGKIKEELEDLDKEIKKTANRIRGKLKSIEQSCD) form a coiled coil. The 63-residue stretch at 192-254 (LNEIESRHKD…EHAKEETKKA (63 aa)) folds into the t-SNARE coiled-coil homology domain. The helical; Anchor for type IV membrane protein transmembrane segment at 266–289 (WIIAAVAVAVIAVLALIIGLSVGK) threads the bilayer.

This sequence belongs to the syntaxin family. In terms of assembly, interacts with SYT6 and SYT8; the interaction is Ca(2+)-dependent.

It is found in the membrane. Functionally, essential for epithelial morphogenesis. May mediate Ca(2+)-regulation of exocytosis acrosomal reaction in sperm. In Mus musculus (Mouse), this protein is Syntaxin-2 (Stx2).